Consider the following 1039-residue polypeptide: Probable calcium-transporting ATPase 9, plasma membrane-type (1039 aa).

The Cytoplasmic portion of the chain corresponds to 1-175 (MEKLDRYLQE…FVWDALQDMT (175 aa)). Transmembrane regions (helical) follow at residues 176 to 196 (LIIL…TEGW) and 199 to 219 (GMYD…VTAV). At 220–250 (SDYKQSLQFKELDNEKKKIFIHVTRDGRRQK) the chain is on the cytoplasmic side. The next 2 helical transmembrane spans lie at 251–271 (ISIY…DQVP) and 353–373 (VATI…LVLL). Topologically, residues 374–406 (VRFLIDKGMTVGLLKWYSTDALTIVNYFATAVT) are cytoplasmic. The helical transmembrane segment at 407-427 (IIVVAVPEGLPLAVTLSLAFA) threads the bilayer. The 4-aspartylphosphate intermediate role is filled by Asp456. The Mg(2+) site is built by Asp758 and Asp762. The helical transmembrane segment at 825-845 (IVALVINFVSACIIGSAPLTA) threads the bilayer. Residues 846 to 847 (VQ) lie on the Cytoplasmic side of the membrane. Helical transmembrane passes span 848-868 (LLWV…TEPP) and 892-912 (NIMG…FGGE). At 913 to 960 (RLLNIKGADSKSIINTLIFNSFVFCQVFNEINSREMQKINVFRGIISN) the chain is on the cytoplasmic side. The next 2 membrane-spanning stretches (helical) occupy residues 961 to 981 (WIFI…IEFL) and 995 to 1015 (WLLS…LKCI). Over 1016 to 1039 (PVGSGETSATPNGYRPLANGPDDI) the chain is Cytoplasmic.

The protein belongs to the cation transport ATPase (P-type) (TC 3.A.3) family. Type IIB subfamily.

Its subcellular location is the membrane. It carries out the reaction Ca(2+)(in) + ATP + H2O = Ca(2+)(out) + ADP + phosphate + H(+). With respect to regulation, activated by calmodulin. Functionally, this magnesium-dependent enzyme catalyzes the hydrolysis of ATP coupled with the translocation of calcium from the cytosol out of the cell, into the endoplasmic reticulum, or into organelles. This chain is Probable calcium-transporting ATPase 9, plasma membrane-type, found in Oryza sativa subsp. japonica (Rice).